The chain runs to 652 residues: Phosphoglucomutase 1, chloroplastic (652 aa).

A chloroplast-targeting transit peptide spans Met1–Arg84. Arg118 and Ser211 together coordinate alpha-D-glucose 1,6-bisphosphate. Residue Ser211 is the Phosphoserine intermediate of the active site. 4 residues coordinate Mg(2+): Ser211, Asp376, Asp378, and Asp380. Ser211 is subject to Phosphoserine. Asp380, Arg381, Thr443, Glu462, Ser464, and Lys475 together coordinate alpha-D-glucose 1,6-bisphosphate.

Belongs to the phosphohexose mutase family. Requires Mg(2+) as cofactor.

Its subcellular location is the plastid. The protein resides in the chloroplast. It catalyses the reaction alpha-D-glucose 1-phosphate = alpha-D-glucose 6-phosphate. The catalysed reaction is O-phospho-L-seryl-[protein] + alpha-D-glucose 1-phosphate = alpha-D-glucose 1,6-bisphosphate + L-seryl-[protein]. It carries out the reaction alpha-D-glucose 1,6-bisphosphate + L-seryl-[protein] = O-phospho-L-seryl-[protein] + alpha-D-glucose 6-phosphate. Its activity is regulated as follows. Inhibited by the Calvin cycle intermediates fructose-1,6-bisphosphate and ribulose-1,5-bisphosphate. Its function is as follows. Catalyzes the reversible isomerization of alpha-D-glucose 1-phosphate to alpha-D-glucose 6-phosphate. The mechanism proceeds via the intermediate compound alpha-D-glucose 1,6-bisphosphate. This enzyme participates in both the breakdown and synthesis of glucose. Required for sucrose production and accumulation necessary during plant development. Promotes gravitropic responses, negative in shoots but positive in roots, by facilitating starch granules (statoliths) formation. The protein is Phosphoglucomutase 1, chloroplastic of Marchantia polymorpha (Common liverwort).